We begin with the raw amino-acid sequence, 256 residues long: GDSL esterase/lipase CPRD49 (256 aa).

The N-terminal stretch at 1 to 27 (MVGPARPQIVLFGSSIVQMSFGHGGWG) is a signal peptide. The Nucleophile role is filled by serine 15. Asparagine 49 and asparagine 79 each carry an N-linked (GlcNAc...) asparagine glycan. Residue histidine 213 is part of the active site. An N-linked (GlcNAc...) asparagine glycan is attached at asparagine 243.

The protein belongs to the 'GDSL' lipolytic enzyme family. In terms of tissue distribution, specifically expressed in anthers (stages 8-12).

It is found in the secreted. This Arabidopsis thaliana (Mouse-ear cress) protein is GDSL esterase/lipase CPRD49 (CPRD49).